A 229-amino-acid chain; its full sequence is Probable septum site-determining protein MinC (229 aa).

Belongs to the MinC family. As to quaternary structure, interacts with MinD and FtsZ.

In terms of biological role, cell division inhibitor that blocks the formation of polar Z ring septums. Rapidly oscillates between the poles of the cell to destabilize FtsZ filaments that have formed before they mature into polar Z rings. Prevents FtsZ polymerization. The protein is Probable septum site-determining protein MinC of Ruminiclostridium cellulolyticum (strain ATCC 35319 / DSM 5812 / JCM 6584 / H10) (Clostridium cellulolyticum).